The primary structure comprises 287 residues: Very long chain fatty acid elongase 4 (287 aa).

3 helical membrane passes run 33–53 (ILVY…EHIM), 64–84 (PFVV…YSCV), and 115–135 (FWVF…VFLV). The short motif at 145–149 (HWYHH) is the HxxHH motif element. Histidine 148 functions as the Nucleophile in the catalytic mechanism. 4 helical membrane-spanning segments follow: residues 150-170 (LTVA…GLWF), 172-192 (TMNY…ACGM), 199-219 (IAPF…LIVL), and 241-261 (LGLV…GKLY).

This sequence belongs to the ELO family.

It is found in the membrane. It catalyses the reaction a very-long-chain acyl-CoA + malonyl-CoA + H(+) = a very-long-chain 3-oxoacyl-CoA + CO2 + CoA. Its function is as follows. Involved in the synthesis of fatty acids. Elongates C16:0 and C18:0 fatty acids to C26:0, with C24:0 being the main product. In Trypanosoma cruzi (strain CL Brener), this protein is Very long chain fatty acid elongase 4.